Here is a 156-residue protein sequence, read N- to C-terminus: MTHPLIPDLLHLAIPIAENLGLEVVDIVFQTNKRPPVLRVDIRNLAGDTGLEDCEQMSRALETALDSQEILPGAYVLEISSPGISRQLSSEREFQSFKGFPVIVTGQDSQGKPQEWRGKLQGRDEQSIYLNQKGRSLTIDRTTVISVRLDERRSNQ.

This sequence belongs to the RimP family.

The protein resides in the cytoplasm. Required for maturation of 30S ribosomal subunits. This is Ribosome maturation factor RimP from Microcystis aeruginosa (strain NIES-843 / IAM M-2473).